Consider the following 448-residue polypeptide: MVMLISLSFKKVIWMNVDPNLTKYMIKAKIYTDGVVEKPDVVGAIFGQTEGLLGDDLDLRDLQKSGKIGRIEVEIDSKKGRTEGYALIPSGLDQVETAILAAALETIDRIGPCKAKVEIANVEDVRVQKRQKIIERAKKIYQDMNSKGDDLSESLVKSVREEVEKSEIISYGEEKLPAGPAINDSDSIIVVEGRNDVLNLLKYGIKNTIAVQGTNIPETVKKLSKERTVTVFLDGDRGGDLILKEMLQVAEADFVARAPPGTEVEELTYKQIVKALRYKTPIDQYLSMHGMNDELKEYSQRNNLVFGSQPNNNHEAKAEVIEEPPEQPPKNEEIREEQSQQVTVQKEGFLDLLNPHEVSKRIEALAQLKMTEVYDSNGERIFSFPVSEAVERISQDPRGNTIVTGGIISQRLIDVSYNAGIKNIYGLKLGHITKKPVDINVIAWERSL.

Positions 186 to 260 (DSIIVVEGRN…EADFVARAPP (75 aa)) constitute a Toprim domain. Mg(2+)-binding residues include glutamate 192, aspartate 234, and aspartate 236. Residues 318–340 (AEVIEEPPEQPPKNEEIREEQSQ) are disordered. Residues 329 to 338 (PKNEEIREEQ) are compositionally biased toward basic and acidic residues.

Belongs to the archaeal DnaG primase family. As to quaternary structure, forms a ternary complex with MCM helicase and DNA. Component of the archaeal exosome complex. Mg(2+) is required as a cofactor.

It carries out the reaction ssDNA + n NTP = ssDNA/pppN(pN)n-1 hybrid + (n-1) diphosphate.. RNA polymerase that catalyzes the synthesis of short RNA molecules used as primers for DNA polymerase during DNA replication. Also part of the exosome, which is a complex involved in RNA degradation. Acts as a poly(A)-binding protein that enhances the interaction between heteromeric, adenine-rich transcripts and the exosome. The sequence is that of DNA primase DnaG from Thermoplasma acidophilum (strain ATCC 25905 / DSM 1728 / JCM 9062 / NBRC 15155 / AMRC-C165).